The chain runs to 209 residues: Imidazoleglycerol-phosphate dehydratase (209 aa).

Residues 1–23 form a disordered region; the sequence is MQLSDRPLTAPGTAPRQATVSRR.

It belongs to the imidazoleglycerol-phosphate dehydratase family.

The protein resides in the cytoplasm. The enzyme catalyses D-erythro-1-(imidazol-4-yl)glycerol 3-phosphate = 3-(imidazol-4-yl)-2-oxopropyl phosphate + H2O. Its pathway is amino-acid biosynthesis; L-histidine biosynthesis; L-histidine from 5-phospho-alpha-D-ribose 1-diphosphate: step 6/9. The polypeptide is Imidazoleglycerol-phosphate dehydratase (Synechococcus elongatus (strain ATCC 33912 / PCC 7942 / FACHB-805) (Anacystis nidulans R2)).